A 400-amino-acid polypeptide reads, in one-letter code: Serine/threonine transporter SstT (400 aa).

9 helical membrane-spanning segments follow: residues 14 to 34 (IIIA…VTPY), 48 to 68 (SVAP…FQVG), 76 to 96 (VLLL…IASL), 136 to 156 (AISE…GLAM), 177 to 197 (IIHK…AVTF), 211 to 231 (LLVV…PILV), 285 to 305 (IPLG…VLTL), 311 to 331 (LGIH…TISA), and 349 to 371 (CSLF…IISV).

It belongs to the dicarboxylate/amino acid:cation symporter (DAACS) (TC 2.A.23) family.

The protein resides in the cell inner membrane. The enzyme catalyses L-serine(in) + Na(+)(in) = L-serine(out) + Na(+)(out). The catalysed reaction is L-threonine(in) + Na(+)(in) = L-threonine(out) + Na(+)(out). In terms of biological role, involved in the import of serine and threonine into the cell, with the concomitant import of sodium (symport system). In Acinetobacter baumannii (strain AB307-0294), this protein is Serine/threonine transporter SstT.